A 151-amino-acid polypeptide reads, in one-letter code: Putative pre-16S rRNA nuclease (151 aa).

This sequence belongs to the YqgF nuclease family.

The protein resides in the cytoplasm. Could be a nuclease involved in processing of the 5'-end of pre-16S rRNA. In Neisseria meningitidis serogroup B (strain ATCC BAA-335 / MC58), this protein is Putative pre-16S rRNA nuclease.